The chain runs to 366 residues: Chorismate synthase (366 aa).

The NADP(+) site is built by Arg48 and Arg54. FMN is bound by residues 125 to 127 (RSS), 241 to 242 (NA), Gly285, 300 to 304 (KPTSS), and Arg326.

This sequence belongs to the chorismate synthase family. As to quaternary structure, homotetramer. FMNH2 serves as cofactor.

The enzyme catalyses 5-O-(1-carboxyvinyl)-3-phosphoshikimate = chorismate + phosphate. It functions in the pathway metabolic intermediate biosynthesis; chorismate biosynthesis; chorismate from D-erythrose 4-phosphate and phosphoenolpyruvate: step 7/7. In terms of biological role, catalyzes the anti-1,4-elimination of the C-3 phosphate and the C-6 proR hydrogen from 5-enolpyruvylshikimate-3-phosphate (EPSP) to yield chorismate, which is the branch point compound that serves as the starting substrate for the three terminal pathways of aromatic amino acid biosynthesis. This reaction introduces a second double bond into the aromatic ring system. The polypeptide is Chorismate synthase (Cereibacter sphaeroides (strain ATCC 17029 / ATH 2.4.9) (Rhodobacter sphaeroides)).